A 338-amino-acid polypeptide reads, in one-letter code: Lipoate-protein ligase A (338 aa).

The BPL/LPL catalytic domain occupies 29–216 (PATQRVLFLW…AFFAHYGERV (188 aa)). Residues Arg71, 76–79 (GAVF), and Lys134 each bind ATP. Lys134 is a binding site for (R)-lipoate.

This sequence belongs to the LplA family. Monomer.

The protein localises to the cytoplasm. It carries out the reaction L-lysyl-[lipoyl-carrier protein] + (R)-lipoate + ATP = N(6)-[(R)-lipoyl]-L-lysyl-[lipoyl-carrier protein] + AMP + diphosphate + H(+). The protein operates within protein modification; protein lipoylation via exogenous pathway; protein N(6)-(lipoyl)lysine from lipoate: step 1/2. It functions in the pathway protein modification; protein lipoylation via exogenous pathway; protein N(6)-(lipoyl)lysine from lipoate: step 2/2. Functionally, catalyzes both the ATP-dependent activation of exogenously supplied lipoate to lipoyl-AMP and the transfer of the activated lipoyl onto the lipoyl domains of lipoate-dependent enzymes. The polypeptide is Lipoate-protein ligase A (Salmonella agona (strain SL483)).